The primary structure comprises 102 residues: Integration host factor subunit beta (102 aa).

The protein belongs to the bacterial histone-like protein family. In terms of assembly, heterodimer of an alpha and a beta chain.

Functionally, this protein is one of the two subunits of integration host factor, a specific DNA-binding protein that functions in genetic recombination as well as in transcriptional and translational control. The sequence is that of Integration host factor subunit beta from Marinomonas sp. (strain MWYL1).